A 452-amino-acid polypeptide reads, in one-letter code: Metacaspase-1 (452 aa).

Residues 1–97 (MYPGAGRPTY…GPPLQGRPRD (97 aa)) form a disordered region. The span at 16-41 (QKGPYGQPQYQQQYAPPYPERYQQPY) shows a compositional bias: low complexity. Catalysis depends on residues histidine 238 and cysteine 294.

The protein belongs to the peptidase C14B family.

Involved in cell death (apoptosis). This Eremothecium gossypii (strain ATCC 10895 / CBS 109.51 / FGSC 9923 / NRRL Y-1056) (Yeast) protein is Metacaspase-1 (MCA1).